The primary structure comprises 645 residues: 1-deoxy-D-xylulose-5-phosphate synthase (645 aa).

Thiamine diphosphate-binding positions include histidine 87 and 128–130; that span reads GHS. Mg(2+) is bound at residue aspartate 159. Thiamine diphosphate-binding positions include 160 to 161, asparagine 188, phenylalanine 295, and glutamate 384; that span reads GA. A Mg(2+)-binding site is contributed by asparagine 188.

It belongs to the transketolase family. DXPS subfamily. As to quaternary structure, homodimer. The cofactor is Mg(2+). Thiamine diphosphate is required as a cofactor.

The catalysed reaction is D-glyceraldehyde 3-phosphate + pyruvate + H(+) = 1-deoxy-D-xylulose 5-phosphate + CO2. Its pathway is metabolic intermediate biosynthesis; 1-deoxy-D-xylulose 5-phosphate biosynthesis; 1-deoxy-D-xylulose 5-phosphate from D-glyceraldehyde 3-phosphate and pyruvate: step 1/1. Its function is as follows. Catalyzes the acyloin condensation reaction between C atoms 2 and 3 of pyruvate and glyceraldehyde 3-phosphate to yield 1-deoxy-D-xylulose-5-phosphate (DXP). The chain is 1-deoxy-D-xylulose-5-phosphate synthase from Alcanivorax borkumensis (strain ATCC 700651 / DSM 11573 / NCIMB 13689 / SK2).